The primary structure comprises 264 residues: Cell division protein DivIB (264 aa).

At 1 to 23 (MAVYEERIPQVKQQRPRRRGNRK) the chain is on the cytoplasmic side. Residues 24-44 (LVFLLVLFFLTILIIVFIRSP) form a helical membrane-spanning segment. The Extracellular portion of the chain corresponds to 45-264 (YSKVQEIRVT…GQEQPQQPQQ (220 aa)). Residues 46–114 (SKVQEIRVTG…GLITLHITEQ (69 aa)) form the POTRA domain.

This sequence belongs to the FtsQ/DivIB family. DivIB subfamily.

The protein localises to the cell membrane. In terms of biological role, cell division protein that may be involved in stabilizing or promoting the assembly of the division complex. The sequence is that of Cell division protein DivIB from Brevibacillus brevis (strain 47 / JCM 6285 / NBRC 100599).